The sequence spans 450 residues: Chromosomal replication initiator protein DnaA (450 aa).

Positions 1–79 (MENIHDLWNR…TGEELLIKFI (79 aa)) are domain I, interacts with DnaA modulators. Residues 79-111 (ITPPNQSEDDFEFQRSSKKHRKPYEESTDFPQS) form a domain II region. A domain III, AAA+ region region spans residues 112–328 (MLNPKYTFDT…GALIRVVAYS (217 aa)). 4 residues coordinate ATP: glycine 156, glycine 158, lysine 159, and threonine 160. The domain IV, binds dsDNA stretch occupies residues 329–450 (SLINKEITAD…KEIEEKLKQL (122 aa)).

It belongs to the DnaA family. In terms of assembly, oligomerizes as a right-handed, spiral filament on DNA at oriC.

It localises to the cytoplasm. Plays an essential role in the initiation and regulation of chromosomal replication. ATP-DnaA binds to the origin of replication (oriC) to initiate formation of the DNA replication initiation complex once per cell cycle. Binds the DnaA box (a 9 base pair repeat at the origin) and separates the double-stranded (ds)DNA. Forms a right-handed helical filament on oriC DNA; dsDNA binds to the exterior of the filament while single-stranded (ss)DNA is stabiized in the filament's interior. The ATP-DnaA-oriC complex binds and stabilizes one strand of the AT-rich DNA unwinding element (DUE), permitting loading of DNA polymerase. After initiation quickly degrades to an ADP-DnaA complex that is not apt for DNA replication. Binds acidic phospholipids. The polypeptide is Chromosomal replication initiator protein DnaA (Geobacillus sp. (strain WCH70)).